The following is a 392-amino-acid chain: MSMPTIRAVRALTVRGGGADYHDQDAGHWIDDHIATPMSRYPEYRQSRQSFGINVLGTLVIEVEASDGTVGFAVTTGGEIGAFIVERHLARFIEGQRVTDIEKMWDQMFHATLYYGRKGVVLNAISGVDLALWDLLAKVRREPVHQLLGGKVRDELEFYATGARPDLAKEMGFIGGKLPLHHGPAEGEAGLRRNLDALADMRSRVGADFWLMLDCWMSLDVPYATRLAHEAHALGLKWIEECLPPDDYWGYAKLRRDVPRGMLVTTGEHEATRWGFRMLLEMECCDIIQPDVGWCGGLTELIRISALADARGVLVIPHGSSVYSYHFVATRHNSPFAEFLMMAPQADRVVPMFDPLLLDEPVPVGGRMKVPDTPGFGVRLNPDVRMQRPYEH.

Substrate contacts are provided by His-22 and Arg-48. Mg(2+) is bound by residues Asp-214, Glu-240, and Glu-268. The active-site Proton acceptor is His-318. Substrate is bound at residue Glu-338.

Belongs to the mandelate racemase/muconate lactonizing enzyme family. RhamD subfamily. In terms of assembly, homooctamer; tetramer of dimers. Mg(2+) serves as cofactor.

It carries out the reaction L-rhamnonate = 2-dehydro-3-deoxy-L-rhamnonate + H2O. Catalyzes the dehydration of L-rhamnonate to 2-keto-3-deoxy-L-rhamnonate (KDR). This is L-rhamnonate dehydratase from Burkholderia orbicola (strain MC0-3).